A 179-amino-acid chain; its full sequence is Large ribosomal subunit protein uL5 (179 aa).

This sequence belongs to the universal ribosomal protein uL5 family. Part of the 50S ribosomal subunit; part of the 5S rRNA/L5/L18/L25 subcomplex. Contacts the 5S rRNA and the P site tRNA. Forms a bridge to the 30S subunit in the 70S ribosome.

This is one of the proteins that bind and probably mediate the attachment of the 5S RNA into the large ribosomal subunit, where it forms part of the central protuberance. In the 70S ribosome it contacts protein S13 of the 30S subunit (bridge B1b), connecting the 2 subunits; this bridge is implicated in subunit movement. Contacts the P site tRNA; the 5S rRNA and some of its associated proteins might help stabilize positioning of ribosome-bound tRNAs. This Photorhabdus laumondii subsp. laumondii (strain DSM 15139 / CIP 105565 / TT01) (Photorhabdus luminescens subsp. laumondii) protein is Large ribosomal subunit protein uL5.